The sequence spans 222 residues: MNKILSLFLITILLISKVMSSSEECKLCTDFMYDSLNELIEIAINGGVIGSCGALCNKLGIAPLCMVCAIACDAVGINGFMDLLQDVFPDPIYICESVKMCQYNDKANATITEVVINPMSGNVGDTFKIGVSFNVTNTIATGEILWNVVDPRGFQFGETEVIIDAAPSIYGAAFSFQATPSEQEEFPPGEYQLQMQICEGTCGSPHPHSYILSNQYLNFTII.

The signal sequence occupies residues 1–20; the sequence is MNKILSLFLITILLISKVMS. The Saposin B-type domain maps to 21 to 105; the sequence is SSEECKLCTD…ESVKMCQYND (85 aa). 3 cysteine pairs are disulfide-bonded: Cys-25–Cys-101, Cys-28–Cys-95, and Cys-56–Cys-68. 3 N-linked (GlcNAc...) asparagine glycosylation sites follow: Asn-108, Asn-134, and Asn-218.

It belongs to the countin family.

Its subcellular location is the secreted. Its function is as follows. May control the size of the multicellular structure. The protein is Countin-3 (ctnC) of Dictyostelium discoideum (Social amoeba).